We begin with the raw amino-acid sequence, 470 residues long: Growth/differentiation factor 6 (470 aa).

The first 22 residues, 1 to 22 (MDTSRVLLSAVFLISFLWDLPG), serve as a signal peptide directing secretion. The propeptide occupies 23–350 (FQQASISSSS…SPSPGRRRRR (328 aa)). Residues 28–98 (ISSSSSSAEL…REPPGRGPRV (71 aa)) form a disordered region. Residues 45-80 (SRKEGRMPRAPRENATAREPLDRQEPPPRPQEEPQR) are compositionally biased toward basic and acidic residues. Asparagine 120 is a glycosylation site (N-linked (GlcNAc...) asparagine). Disordered stretches follow at residues 247 to 272 (PGAA…SLGF) and 308 to 366 (TEVV…KKSR). The segment covering 321–333 (GPPPPPPPPPPSG) has biased composition (pro residues). Positions 345-366 (GRRRRRTAFASRHGKRHGKKSR) are enriched in basic residues. 3 disulfide bridges follow: cysteine 369/cysteine 435, cysteine 398/cysteine 467, and cysteine 402/cysteine 469.

Belongs to the TGF-beta family. In terms of assembly, homodimer; disulfide-linked.

The protein resides in the secreted. In terms of biological role, growth factor that controls proliferation and cellular differentiation in the retina and bone formation. Plays a key role in regulating apoptosis during retinal development. Establishes dorsal-ventral positional information in the retina and controls the formation of the retinotectal map. Required for normal formation of bones and joints in the limbs, skull, digits and axial skeleton. Plays a key role in establishing boundaries between skeletal elements during development. Regulation of GDF6 expression seems to be a mechanism for evolving species-specific changes in skeletal structures. Seems to positively regulate differentiation of chondrogenic tissue through the growth factor receptors subunits BMPR1A, BMPR1B, BMPR2 and ACVR2A, leading to the activation of SMAD1-SMAD5-SMAD8 complex. The regulation of chondrogenic differentiation is inhibited by NOG. Also involved in the induction of adipogenesis from mesenchymal stem cells. This mechanism acts through the growth factor receptors subunits BMPR1A, BMPR2 and ACVR2A and the activation of SMAD1-SMAD5-SMAD8 complex and MAPK14/p38. This is Growth/differentiation factor 6 (GDF6) from Bos taurus (Bovine).